Reading from the N-terminus, the 55-residue chain is uncharacterized protein (55 aa).

This is an uncharacterized protein from Dictyostelium discoideum (Social amoeba).